Reading from the N-terminus, the 162-residue chain is Caveolin-2 (162 aa).

Over 1 to 86 the chain is Cytoplasmic; sequence MGLETEKADV…FEISKYVMYK (86 aa). Tyrosine 19 carries the phosphotyrosine; by SRC modification. Phosphoserine is present on residues serine 20 and serine 23. Tyrosine 27 carries the phosphotyrosine; by SRC modification. At serine 36 the chain carries Phosphoserine. Positions 87–107 form an intramembrane region, helical; that stretch reads FLTVFLAIPLAFIAGILFATL. The Cytoplasmic segment spans residues 108 to 162; the sequence is SCLHIWILMPFVKTCLMVLPSVQTIWKSVTDVIIAPLCTSVGRCFSSVSLQLSQD.

The protein belongs to the caveolin family. In terms of assembly, monomer or homodimer. Interacts with CAV1; the interaction forms a stable heterooligomeric complex that is required for targeting to lipid rafts and for caveolae formation. Tyrosine phosphorylated forms do not form heterooligomers with the Tyr-19-phosphorylated form existing as a monomer or dimer, and the Tyr-27-form as a monomer only. Interacts (tyrosine phosphorylated form) with the SH2 domain-containing proteins, RASA1, NCK1 and SRC. Interacts (tyrosine phosphorylated form) with INSR, the interaction (Tyr-27-phosphorylated form) is increased on insulin stimulation. Interacts (Tyr-19 phosphorylated form) with MAPK1 (phosphorylated form); the interaction, promoted by insulin, leads to nuclear location and MAPK1 activation. Interacts with STAT3; the interaction is increased on insulin-induced tyrosine phosphorylation leading to STAT activation. Phosphorylated on serine and tyrosine residues. CAV1 promotes phosphorylation on Ser-23 which then targets the complex to the plasma membrane, lipid rafts and caveolae. Phosphorylation on Ser-36 appears to modulate mitosis in endothelial cells. Phosphorylation on both Tyr-19 and Tyr-27 is required for insulin-induced 'Ser-727' phosphorylation of STAT3 and its activation. Phosphorylation on Tyr-19 is required for insulin-induced phosphorylation of MAPK1 and DNA binding of STAT3. Tyrosine phosphorylation is induced by both EGF and insulin (By. similarity).

Its subcellular location is the nucleus. The protein localises to the cytoplasm. It localises to the golgi apparatus membrane. It is found in the cell membrane. The protein resides in the membrane. Its subcellular location is the caveola. Functionally, may act as a scaffolding protein within caveolar membranes. Interacts directly with G-protein alpha subunits and can functionally regulate their activity. Acts as an accessory protein in conjunction with CAV1 in targeting to lipid rafts and driving caveolae formation. The Ser-36 phosphorylated form has a role in modulating mitosis in endothelial cells. Positive regulator of cellular mitogenesis of the MAPK signaling pathway. Required for the insulin-stimulated nuclear translocation and activation of MAPK1 and STAT3, and the subsequent regulation of cell cycle progression. In Pan troglodytes (Chimpanzee), this protein is Caveolin-2 (CAV2).